Reading from the N-terminus, the 152-residue chain is MVKAVTVLSGSGGVSGVIHFTQEEDGPTTVTGKLSGLAPGLHGFHVHALGDTTNGCLSTGPHYNPANKEHGAPEDETRHAGDLGNVTVGEDGTAEFTIVDKQIPLIGSGSIIGRAVVVHADPDDLGKGGHELSKSTGNAGGRLACGFIGLQG.

The Cu cation site is built by H45, H47, and H62. C56 and C145 are disulfide-bonded. The Zn(2+) site is built by H62, H70, H79, and D82. H119 serves as a coordination point for Cu cation.

It belongs to the Cu-Zn superoxide dismutase family. As to quaternary structure, homodimer. Cu cation is required as a cofactor. The cofactor is Zn(2+).

It localises to the cytoplasm. It carries out the reaction 2 superoxide + 2 H(+) = H2O2 + O2. Functionally, destroys radicals which are normally produced within the cells and which are toxic to biological systems. In Panax ginseng (Korean ginseng), this protein is Superoxide dismutase [Cu-Zn] (SODCC).